Here is a 377-residue protein sequence, read N- to C-terminus: 3-(aryl)acrylate reductase (377 aa).

FAD contacts are provided by residues 121-130 (FALTEPGAGS), 154-156 (FIT), R266, Q277, and 334-338 (QIHGG). The active-site Proton acceptor is the E361. 363 to 365 (TSE) is an FAD binding site.

It belongs to the acyl-CoA dehydrogenase family. Requires FAD as cofactor.

It carries out the reaction 3-phenylpropanoate + oxidized [electron-transfer flavoprotein] + H(+) = (E)-cinnamate + reduced [electron-transfer flavoprotein]. It catalyses the reaction phloretate + oxidized [electron-transfer flavoprotein] + H(+) = (E)-4-coumarate + reduced [electron-transfer flavoprotein]. The enzyme catalyses indole-3-propanoate + oxidized [electron-transfer flavoprotein] + H(+) = (E)-3-(indol-3-yl)acrylate + reduced [electron-transfer flavoprotein]. The protein operates within amino-acid degradation. Its function is as follows. Essential for the reductive metabolism of L-phenylalanine, L-tyrosine and L-tryptophan. Catalyzes the reduction of phenylacrylic acid to phenylpropionic acid, 4-hydroxy-phenylacrylic acid to 4-hydroxy-phenylpropionic acid, and indoleacrylic acid to indolepropionic acid. This chain is 3-(aryl)acrylate reductase, found in Clostridium sporogenes (strain ATCC 15579).